Reading from the N-terminus, the 160-residue chain is MIHDRIEDFLASLPRTGALAGLDLGTKTVGVAVSDGLRRIATPLLTVRRTKFTEDAAKLKAIAAERRLVGIVLGLPRNMDGSEGPRAQSTRAFARNLVQVLPLPVGFWDERLSTVAAERALLEADTSRKRRAEVIDHVAAGYILQGVLDRLDWLGREGGA.

This sequence belongs to the YqgF nuclease family.

Its subcellular location is the cytoplasm. Could be a nuclease involved in processing of the 5'-end of pre-16S rRNA. In Cereibacter sphaeroides (strain ATCC 17029 / ATH 2.4.9) (Rhodobacter sphaeroides), this protein is Putative pre-16S rRNA nuclease.